We begin with the raw amino-acid sequence, 125 residues long: Large ribosomal subunit protein bL12 (125 aa).

Belongs to the bacterial ribosomal protein bL12 family. Homodimer. Part of the ribosomal stalk of the 50S ribosomal subunit. Forms a multimeric L10(L12)X complex, where L10 forms an elongated spine to which 2 to 4 L12 dimers bind in a sequential fashion. Binds GTP-bound translation factors.

Functionally, forms part of the ribosomal stalk which helps the ribosome interact with GTP-bound translation factors. Is thus essential for accurate translation. In Nitrobacter winogradskyi (strain ATCC 25391 / DSM 10237 / CIP 104748 / NCIMB 11846 / Nb-255), this protein is Large ribosomal subunit protein bL12.